The chain runs to 265 residues: Short chain dehydrogenase mdpC (265 aa).

NADP(+)-binding residues include isoleucine 25, asparagine 98, and arginine 131. Active-site proton donor residues include serine 147 and serine 148. NADP(+)-binding residues include tyrosine 162, lysine 166, and threonine 197. Tyrosine 162 functions as the Proton acceptor in the catalytic mechanism. Lysine 166 (lowers pKa of active site Tyr) is an active-site residue.

The protein belongs to the short-chain dehydrogenases/reductases (SDR) family.

It carries out the reaction 3,8,9,10-tetrahydroxy-6-methyl-1,4-dihydroanthracen-1-one + NADPH + H(+) = (3R)-3,8,9,10-tetrahydroxy-6-methyl-1,2,3,4-tetrahydroanthracen-1-one + NADP(+). Its pathway is secondary metabolite biosynthesis. Short chain dehydrogenase; part of the gene cluster that mediates the biosynthesis of monodictyphenone, a prenyl xanthone derivative. The pathway begins with the synthesis of atrochrysone thioester by the polyketide synthase (PKS) mdpG. The atrochrysone carboxyl ACP thioesterase mdpF then breaks the thioester bond and releases the atrochrysone carboxylic acid from mdpG. The atrochrysone carboxylic acid is then converted to atrochrysone which is further transformed into emodin anthrone. The next step is performed by the anthrone oxygenase mdpH that catalyzes the oxidation of emodinanthrone to emodin. Emodin is further modified to yield monodictyphenone via several steps involving mdpB, mdpC mdpJ, mdpK and mdpL. The short chain dehydrogenase mdpC converts the tautomers of emodin hydroquinone into the 3-hydroxy-3,4-dihydroan-thracen-1(2H)-one derivative. These enzymes with xptA, xptB and xptC are also proposed to be involved in the synthesis of shamixanthone from emodin. Especially, direct reduction of emodin by the short chain dehydrogenase mdpC followed by dehydration catalyzed by the scytalone dehydratase-like protein mdpB gives loss of oxygen and formation of chrysophanol intermediate in two simple steps. In Emericella nidulans (strain FGSC A4 / ATCC 38163 / CBS 112.46 / NRRL 194 / M139) (Aspergillus nidulans), this protein is Short chain dehydrogenase mdpC.